The following is a 179-amino-acid chain: uncharacterized protein (179 aa).

A helical membrane pass occupies residues 5–25; it reads MLAGIGIGVAAALGVAAVASL.

This sequence to Rickettsia 17 kDa surface antigen.

It localises to the membrane. This is an uncharacterized protein from Escherichia coli O6:H1 (strain CFT073 / ATCC 700928 / UPEC).